Here is a 252-residue protein sequence, read N- to C-terminus: Cell division protein ZapD (252 aa).

The protein belongs to the ZapD family. Interacts with FtsZ.

The protein resides in the cytoplasm. Its function is as follows. Cell division factor that enhances FtsZ-ring assembly. Directly interacts with FtsZ and promotes bundling of FtsZ protofilaments, with a reduction in FtsZ GTPase activity. The polypeptide is Cell division protein ZapD (Cupriavidus metallidurans (strain ATCC 43123 / DSM 2839 / NBRC 102507 / CH34) (Ralstonia metallidurans)).